Consider the following 1038-residue polypeptide: Translation initiation factor IF-2 (1038 aa).

Disordered stretches follow at residues 39–346 and 403–451; these read TISE…KWQE and KPKA…PEKV. The span at 103–125 shows a compositional bias: polar residues; that stretch reads RNTTSNAPEASVANNQIASSEAN. Positions 157–176 are enriched in low complexity; it reads PQKPAAPEAEPEAQSQAPAK. Basic and acidic residues-rich tracts occupy residues 178–197 and 226–243; these read AVEKPEKSAQPRPGKPERQP and PILKRDRPRREDERDQAK. Residues 407–423 show a composition bias toward low complexity; sequence ARAATAATAAPISSPTT. The span at 431 to 450 shows a compositional bias: basic and acidic residues; sequence NNRDQNRRQETEVKRERPEK. The tr-type G domain occupies 532–705; the sequence is RRPPVVTIMG…LLVAEVGELS (174 aa). The segment at 541–548 is G1; sequence GHVDHGKT. 541 to 548 lines the GTP pocket; sequence GHVDHGKT. The tract at residues 566–570 is G2; that stretch reads GITQH. A G3 region spans residues 591-594; it reads DTPG. GTP is bound by residues 591 to 595 and 645 to 648; these read DTPGH and NKID. Residues 645 to 648 are G4; it reads NKID. The segment at 681–683 is G5; it reads SAI.

It belongs to the TRAFAC class translation factor GTPase superfamily. Classic translation factor GTPase family. IF-2 subfamily.

The protein resides in the cytoplasm. In terms of biological role, one of the essential components for the initiation of protein synthesis. Protects formylmethionyl-tRNA from spontaneous hydrolysis and promotes its binding to the 30S ribosomal subunits. Also involved in the hydrolysis of GTP during the formation of the 70S ribosomal complex. The protein is Translation initiation factor IF-2 of Trichormus variabilis (strain ATCC 29413 / PCC 7937) (Anabaena variabilis).